Here is a 150-residue protein sequence, read N- to C-terminus: Large ribosomal subunit protein bL9 (150 aa).

Belongs to the bacterial ribosomal protein bL9 family.

Its function is as follows. Binds to the 23S rRNA. In Pectobacterium atrosepticum (strain SCRI 1043 / ATCC BAA-672) (Erwinia carotovora subsp. atroseptica), this protein is Large ribosomal subunit protein bL9.